A 723-amino-acid polypeptide reads, in one-letter code: Transcription factor E2F7 (723 aa).

Positions 121 to 146 (AEEEEEEELDDSCQYEALDESERRPS) are disordered. Over residues 122–139 (EEEEEEELDDSCQYEALD) the composition is skewed to acidic residues. 2 DNA-binding regions span residues 147-216 (RKQK…VWHG) and 264-349 (RKDK…KWIG). 2 stretches are compositionally biased toward polar residues: residues 356-370 (SSNS…SNSG) and 395-405 (LISSAPSTPHR). Disordered regions lie at residues 356-379 (SSNS…KMAR), 395-417 (LISS…YSRK), 489-546 (SLRK…ASFG), 650-689 (EHHG…SKSF), and 702-723 (QSAA…TAAN). Positions 494–503 (ERSEEDDHQT) are enriched in basic and acidic residues. Over residues 520–535 (SESLSSSTRRSPVCSP) the composition is skewed to low complexity.

It belongs to the E2F/DP family. Homodimer and heterodimer: mainly forms homodimers and, to a lesser extent, heterodimers with e2f8.

Its subcellular location is the nucleus. Functionally, atypical E2F transcription factor that participates in various processes such as angiogenesis and polyploidization of specialized cells. Mainly acts as a transcription repressor that binds DNA independently of DP proteins and specifically recognizes the E2 recognition site 5'-TTTC[CG]CGC-3'. Directly represses transcription of classical E2F transcription factors such as e2f1. Acts as a regulator of S-phase by recognizing and binding the E2-related site 5'-TTCCCGCC-3' and mediating repression of G1/S-regulated genes. Acts as a promoter of sprouting angiogenesis, possibly by acting as a transcription activator and promoting expression of vegfa. This is Transcription factor E2F7 (e2f7) from Danio rerio (Zebrafish).